Consider the following 602-residue polypeptide: Prostaglandin G/H synthase 1 (602 aa).

An N-terminal signal peptide occupies residues 1-26 (MSRRSLSLQFPLLLLLLLLPPPPVLL). The EGF-like domain occupies 34–72 (PVNPCCYYPCQNQGVCVRFGLDHYQCDCTRTGYSGPNCT). Cystine bridges form between Cys-38/Cys-49, Cys-39/Cys-161, Cys-43/Cys-59, and Cys-61/Cys-71. Residues Asn-70, Asn-106, and Asn-146 are each glycosylated (N-linked (GlcNAc...) asparagine). His-209 acts as the Proton acceptor in catalysis. Tyr-387 serves as the catalytic For cyclooxygenase activity. Position 390 (His-390) interacts with heme b. The N-linked (GlcNAc...) asparagine glycan is linked to Asn-412. A disulfide bond links Cys-571 and Cys-577.

This sequence belongs to the prostaglandin G/H synthase family. In terms of assembly, homodimer. Requires heme b as cofactor.

It is found in the microsome membrane. The protein resides in the endoplasmic reticulum membrane. It carries out the reaction (5Z,8Z,11Z,14Z)-eicosatetraenoate + AH2 + 2 O2 = prostaglandin H2 + A + H2O. It catalyses the reaction (5Z,8Z,11Z,14Z)-eicosatetraenoate + 2 O2 = prostaglandin G2. The catalysed reaction is prostaglandin G2 + AH2 = prostaglandin H2 + A + H2O. The enzyme catalyses (9Z,12Z)-octadecadienoate + AH2 + O2 = (9R)-hydroxy-(10E,12Z)-octadecadienoate + A + H2O. It carries out the reaction (9Z,12Z)-octadecadienoate + AH2 + O2 = (9S)-hydroxy-(10E,12Z)-octadecadienoate + A + H2O. It catalyses the reaction (9Z,12Z)-octadecadienoate + AH2 + O2 = (13S)-hydroxy-(9Z,11E)-octadecadienoate + A + H2O. The catalysed reaction is (9Z,12Z)-octadecadienoate + AH2 + O2 = (13R)-hydroxy-(9Z,11E)-octadecadienoate + A + H2O. It participates in lipid metabolism; prostaglandin biosynthesis. The cyclooxygenase activity is inhibited by nonsteroidal anti-inflammatory drugs (NSAIDs) including ibuprofen, flurbiprofen, ketoprofen, naproxen, flurbiprofen, anirolac, fenclofenac and diclofenac. Its function is as follows. Dual cyclooxygenase and peroxidase that plays an important role in the biosynthesis pathway of prostanoids, a class of C20 oxylipins mainly derived from arachidonate ((5Z,8Z,11Z,14Z)-eicosatetraenoate, AA, C20:4(n-6)), with a particular role in the inflammatory response. The cyclooxygenase activity oxygenates AA to the hydroperoxy endoperoxide prostaglandin G2 (PGG2), and the peroxidase activity reduces PGG2 to the hydroxy endoperoxide prostaglandin H2 (PGH2), the precursor of all 2-series prostaglandins and thromboxanes. This complex transformation is initiated by abstraction of hydrogen at carbon 13 (with S-stereochemistry), followed by insertion of molecular O2 to form the endoperoxide bridge between carbon 9 and 11 that defines prostaglandins. The insertion of a second molecule of O2 (bis-oxygenase activity) yields a hydroperoxy group in PGG2 that is then reduced to PGH2 by two electrons. Involved in the constitutive production of prostanoids in particular in the stomach and platelets. In gastric epithelial cells, it is a key step in the generation of prostaglandins, such as prostaglandin E2 (PGE2), which plays an important role in cytoprotection. In platelets, it is involved in the generation of thromboxane A2 (TXA2), which promotes platelet activation and aggregation, vasoconstriction and proliferation of vascular smooth muscle cells. Can also use linoleate (LA, (9Z,12Z)-octadecadienoate, C18:2(n-6)) as substrate and produce hydroxyoctadecadienoates (HODEs) in a regio- and stereospecific manner, being (9R)-HODE ((9R)-hydroxy-(10E,12Z)-octadecadienoate) and (13S)-HODE ((13S)-hydroxy-(9Z,11E)-octadecadienoate) its major products. The protein is Prostaglandin G/H synthase 1 of Rattus norvegicus (Rat).